The following is a 284-amino-acid chain: tRNA uridine(34) hydroxylase (284 aa).

In terms of domain architecture, Rhodanese spans 132–226 (TGRPVVMLDT…YFEEVGGAHY (95 aa)). The active-site Cysteine persulfide intermediate is the cysteine 186.

This sequence belongs to the TrhO family.

The catalysed reaction is uridine(34) in tRNA + AH2 + O2 = 5-hydroxyuridine(34) in tRNA + A + H2O. Functionally, catalyzes oxygen-dependent 5-hydroxyuridine (ho5U) modification at position 34 in tRNAs. The chain is tRNA uridine(34) hydroxylase from Burkholderia lata (strain ATCC 17760 / DSM 23089 / LMG 22485 / NCIMB 9086 / R18194 / 383).